Consider the following 38-residue polypeptide: Bacteriocin curvaticin FS47 (38 aa).

Its subcellular location is the secreted. Bacteriocin active against Listeria monocytogenes, Pediococcus, Enterococcus, Lactobacilli and Bacilli. This is Bacteriocin curvaticin FS47 from Latilactobacillus curvatus (Lactobacillus curvatus).